A 246-amino-acid polypeptide reads, in one-letter code: Glutamate/aspartate import permease protein GltJ (246 aa).

One can recognise an ABC transmembrane type-1 domain in the interval 29-230 (FQVTIALSIC…LINAFIMLVM (202 aa)). A run of 5 helical transmembrane segments spans residues 33–53 (IALSICAWIIAFLVGSFFGIL), 74–94 (NVPLIVQFFTWYLVIPELLPE), 104–124 (LDPNIQFFLSSMLCLGLFTAA), 179–196 (LVKNSAIASTIGLVDMAA), and 212–232 (FTAITLAYVLINAFIMLVMTL).

The protein belongs to the binding-protein-dependent transport system permease family. HisMQ subfamily. In terms of assembly, the complex is composed of two ATP-binding proteins (GltL), two transmembrane proteins (GltJ and GltK) and a solute-binding protein (GltI).

It localises to the cell inner membrane. Its function is as follows. Part of the ABC transporter complex GltIJKL involved in glutamate and aspartate uptake. Probably responsible for the translocation of the substrate across the membrane. The protein is Glutamate/aspartate import permease protein GltJ (gltJ) of Escherichia coli O6:H1 (strain CFT073 / ATCC 700928 / UPEC).